Consider the following 150-residue polypeptide: Large ribosomal subunit protein bL9 (150 aa).

Belongs to the bacterial ribosomal protein bL9 family.

Its function is as follows. Binds to the 23S rRNA. The protein is Large ribosomal subunit protein bL9 of Mycoplasma genitalium (strain ATCC 33530 / DSM 19775 / NCTC 10195 / G37) (Mycoplasmoides genitalium).